The following is a 209-amino-acid chain: Germin-like protein (209 aa).

Residues 1 to 18 form the signal peptide; the sequence is MIVPIFFLFSLLFSSSHG. Cys-24 and Cys-39 are joined by a disulfide. In terms of domain architecture, Cupin type-1 spans 53 to 199; it reads SGLGITGNTT…ASFLDPAEIK (147 aa). Asn-60 carries an N-linked (GlcNAc...) asparagine glycan. Residues His-101, His-103, Glu-108, and His-147 each contribute to the Mn(2+) site.

It localises to the secreted. The protein resides in the extracellular space. The protein localises to the apoplast. Has antibacterial activity against B.subtilis (MIC=5 ug), B.cereus (MIC=50 ug), A.hydrophila (MIC=2.5 ug), S.marcescens(MIC=10 ug), S.enterica (MIC=10 ug), P.entomophila (MIC=2.5 ug) and P.rhodesiae (MIC=10 ug). Has antifungal activity against F.solani KACC 40384 and F.oxysporum KACC 40032. Probably has no oxalate oxidase activity even if the active site is conserved. In Morus alba (White mulberry), this protein is Germin-like protein.